The chain runs to 338 residues: MO25-like protein 2 (338 aa).

The protein belongs to the Mo25 family.

Its subcellular location is the cytoplasm. It is found in the cytoskeleton. The protein localises to the spindle pole. Functionally, regulates asymmetric cell division in Q.p neuroblast lineage. Plays a role in cell shedding during embryogenesis. The protein is MO25-like protein 2 (mop-25.2) of Caenorhabditis elegans.